Here is a 278-residue protein sequence, read N- to C-terminus: uncharacterized protein (278 aa).

In terms of domain architecture, Response regulatory spans 1-55; that stretch reads MKIRERFSMVDLPVLIITAAIIGHDKYKAFHAGANDILQKPYHYSEFMARIQNLI.

This is an uncharacterized protein from Bacillus subtilis (strain 168).